The following is a 120-amino-acid chain: Cytochrome c-550 (120 aa).

A helical transmembrane segment spans residues 5–25 (PLIPFLLIAVLGIGLTFFLSV). The Periplasmic segment spans residues 26–120 (KGLDDSREIA…DMAEWVSKIK (95 aa)). The heme c site is built by C60, C63, H64, and M99.

In terms of processing, binds 1 heme c group covalently per subunit.

It is found in the cell membrane. In terms of biological role, not essential for growth on minimal or rich media. The chain is Cytochrome c-550 (cccA) from Bacillus subtilis (strain 168).